The following is a 312-amino-acid chain: tRNA pseudouridine synthase B (312 aa).

Catalysis depends on Asp-37, which acts as the Nucleophile.

It belongs to the pseudouridine synthase TruB family. Type 1 subfamily.

The catalysed reaction is uridine(55) in tRNA = pseudouridine(55) in tRNA. Functionally, responsible for synthesis of pseudouridine from uracil-55 in the psi GC loop of transfer RNAs. This Deinococcus geothermalis (strain DSM 11300 / CIP 105573 / AG-3a) protein is tRNA pseudouridine synthase B.